Here is a 407-residue protein sequence, read N- to C-terminus: tRNA-specific 2-thiouridylase MnmA (407 aa).

Residues 20–27 (AMSGGVDS) and Leu-46 contribute to the ATP site. The active-site Nucleophile is Cys-114. Residues Cys-114 and Cys-210 are joined by a disulfide bond. Position 138 (Gly-138) interacts with ATP. The interaction with tRNA stretch occupies residues 160 to 162 (RDQ). Cys-210 functions as the Cysteine persulfide intermediate in the catalytic mechanism.

It belongs to the MnmA/TRMU family.

It localises to the cytoplasm. The catalysed reaction is S-sulfanyl-L-cysteinyl-[protein] + uridine(34) in tRNA + AH2 + ATP = 2-thiouridine(34) in tRNA + L-cysteinyl-[protein] + A + AMP + diphosphate + H(+). Functionally, catalyzes the 2-thiolation of uridine at the wobble position (U34) of tRNA, leading to the formation of s(2)U34. This chain is tRNA-specific 2-thiouridylase MnmA, found in Bartonella tribocorum (strain CIP 105476 / IBS 506).